Here is a 221-residue protein sequence, read N- to C-terminus: CDP-diacylglycerol--glycerol-3-phosphate 3-phosphatidyltransferase (221 aa).

Transmembrane regions (helical) follow at residues 8-28 (ILTV…LYFH), 34-54 (WFAL…GYLA), 75-95 (MVVI…WLIL), 133-153 (AQMV…LEGI), and 187-207 (ATWL…ITGW).

The protein belongs to the CDP-alcohol phosphatidyltransferase class-I family.

The protein localises to the cell membrane. The catalysed reaction is a CDP-1,2-diacyl-sn-glycerol + sn-glycerol 3-phosphate = a 1,2-diacyl-sn-glycero-3-phospho-(1'-sn-glycero-3'-phosphate) + CMP + H(+). It functions in the pathway phospholipid metabolism; phosphatidylglycerol biosynthesis; phosphatidylglycerol from CDP-diacylglycerol: step 1/2. Functionally, this protein catalyzes the committed step to the synthesis of the acidic phospholipids. This chain is CDP-diacylglycerol--glycerol-3-phosphate 3-phosphatidyltransferase (pgsA), found in Cereibacter sphaeroides (strain ATCC 17023 / DSM 158 / JCM 6121 / CCUG 31486 / LMG 2827 / NBRC 12203 / NCIMB 8253 / ATH 2.4.1.) (Rhodobacter sphaeroides).